The sequence spans 205 residues: Beta-crystallin B2 (205 aa).

At A2 the chain carries N-acetylalanine. Residues A2–N16 are N-terminal arm. 2 Beta/gamma crystallin 'Greek key' domains span residues P17–A56 and G57–K101. The connecting peptide stretch occupies residues V102 to E106. 2 consecutive Beta/gamma crystallin 'Greek key' domains span residues H107–S148 and G149–R191. The interval M193–S205 is C-terminal arm.

Belongs to the beta/gamma-crystallin family. In terms of assembly, homo/heterodimer, or complexes of higher-order. The structure of beta-crystallin oligomers seems to be stabilized through interactions between the N-terminal arms.

Its function is as follows. Crystallins are the dominant structural components of the vertebrate eye lens. In Mesocricetus auratus (Golden hamster), this protein is Beta-crystallin B2 (CRYBB2).